The following is a 398-amino-acid chain: Ras-related GTP-binding protein C (398 aa).

A disordered region spans residues 1-56 (MSLQYGAEETPLAGSYGAADSFPKDFGYGVEEEEEEAAAGGGGGAGAGGGCGPGGA). S2 carries the N-acetylserine modification. Phosphoserine occurs at positions 2 and 15. A compositionally biased stretch (gly residues) spans 39–55 (AGGGGGAGAGGGCGPGG). 6 residues coordinate GDP: R70, S71, G72, K73, S74, and S75. A GTP-binding site is contributed by K73. GTP-binding residues include T89 and T95. T95 carries the phosphothreonine modification. GDP-binding residues include H177, K178, D180, and I219. A GTP-binding site is contributed by D180.

It belongs to the GTR/RAG GTP-binding protein family. Forms a heterodimer with RRAGA, in a sequence-independent manner, and RRAGB. Heterodimerization stabilizes proteins of the heterodimer. The GDP-bound form of RRAGC (in complex with the GTP-bound form of RRAGA or RRAGB), interacts with RPTOR, thereby promoting recruitment of mTORC1 to the lysosomes. Component of the lysosomal folliculin complex (LFC), composed of FLCN, FNIP1 (or FNIP2), RagA/RRAGA or RagB/RRAGB GDP-bound, RagC/RRAGC or RagD/RRAGD GTP-bound, and Ragulator. Interacts with NOL8. Interacts with SH3BP4; the interaction with this negative regulator is most probably direct, preferentially occurs with the inactive GDP-bound form of RRAGB, is negatively regulated by amino acids and prevents interaction with RPTOR. The Rag heterodimer interacts with SLC38A9; the probable amino acid sensor. Interacts with SESN1, SESN2 and SESN3. Interacts with PIP4P1. The GDP-bound form interacts with TFEB. The GDP-bound form interacts with TFE3. Expressed most abundantly in kidney. Moderately expressed in brain, ovary, and testis, and detected at lower levels in heart, liver, and muscle. Not detected in lung, spleen, and small intestine. Widely expressed in tumor cells, with expression being specifically up-regulated in highly metastatic cells.

Its subcellular location is the cytoplasm. The protein localises to the nucleus. It is found in the lysosome membrane. The catalysed reaction is GTP + H2O = GDP + phosphate + H(+). With respect to regulation, the activation of RagC/RRAGC is mediated by a GTPase activating protein (GAP). In high-amino acid conditions, activated by GTPase activating protein FLCN that stimulates RRAGC GTPase activity to turn it into its active GDP-bound form. In response to amino acid depletion, the GATOR1 complex inactivates RagC/RRAGC by securing the GTP-bound inactive form. Guanine nucleotide-binding protein that plays a crucial role in the cellular response to amino acid availability through regulation of the mTORC1 signaling cascade. Forms heterodimeric Rag complexes with RagA/RRAGA or RagB/RRAGB and cycles between an inactive GTP-bound and an active GDP-bound form: RagC/RRAGC is in its active form when GDP-bound RagC/RRAGC forms a complex with GTP-bound RagA/RRAGA (or RagB/RRAGB) and in an inactive form when GTP-bound RagC/RRAGC heterodimerizes with GDP-bound RagA/RRAGA (or RagB/RRAGB). In its GDP-bound active form, promotes the recruitment of mTORC1 to the lysosomes and its subsequent activation by the GTPase RHEB. This is a crucial step in the activation of the MTOR signaling cascade by amino acids. Also plays a central role in the non-canonical mTORC1 complex, which acts independently of RHEB and specifically mediates phosphorylation of MiT/TFE factors TFEB and TFE3: GDP-bound RagC/RRAGC mediates recruitment of MiT/TFE factors TFEB and TFE3. The chain is Ras-related GTP-binding protein C from Mus musculus (Mouse).